The sequence spans 627 residues: DNA-directed RNA polymerase subunit gamma (627 aa).

Residues Cys-70, Cys-72, Cys-85, and Cys-88 each coordinate Zn(2+). Residues Asp-468, Asp-470, and Asp-472 each coordinate Mg(2+).

The protein belongs to the RNA polymerase beta' chain family. RpoC1 subfamily. In terms of assembly, in cyanobacteria the RNAP catalytic core is composed of 2 alpha, 1 beta, 1 beta', 1 gamma and 1 omega subunit. When a sigma factor is associated with the core the holoenzyme is formed, which can initiate transcription. Mg(2+) serves as cofactor. Zn(2+) is required as a cofactor.

The enzyme catalyses RNA(n) + a ribonucleoside 5'-triphosphate = RNA(n+1) + diphosphate. Its function is as follows. DNA-dependent RNA polymerase catalyzes the transcription of DNA into RNA using the four ribonucleoside triphosphates as substrates. The chain is DNA-directed RNA polymerase subunit gamma from Synechococcus sp. (strain JA-3-3Ab) (Cyanobacteria bacterium Yellowstone A-Prime).